Consider the following 277-residue polypeptide: MNNENLVIYILSDSIGETAEQVAKAAISQFDTEDYEIRRFPFITEKHHIDEMLQEAKKENSVIVFTMVVEELRNYIMEEAEKMQIRSIDIMSPVLHAMGGALTTTPKREPGLIRRLDEKYFRKVEAIEFAVKYDDGKDSRGLAKADIVLVGISRTSKTPLSMYLAHRNMKVANVPLVPEVTPPKELYEVPSQKIIGLTTNPIKLIEIRQERLKALGLKNEASYASMERILEELEYAEGIMKRIGCPVIDVSTKAVEESAGIILEIFRDRGYNMPNGR.

151-158 (GISRTSKT) serves as a coordination point for ADP.

It belongs to the pyruvate, phosphate/water dikinase regulatory protein family. PDRP subfamily.

It catalyses the reaction N(tele)-phospho-L-histidyl/L-threonyl-[pyruvate, phosphate dikinase] + ADP = N(tele)-phospho-L-histidyl/O-phospho-L-threonyl-[pyruvate, phosphate dikinase] + AMP + H(+). The enzyme catalyses N(tele)-phospho-L-histidyl/O-phospho-L-threonyl-[pyruvate, phosphate dikinase] + phosphate + H(+) = N(tele)-phospho-L-histidyl/L-threonyl-[pyruvate, phosphate dikinase] + diphosphate. Bifunctional serine/threonine kinase and phosphorylase involved in the regulation of the pyruvate, phosphate dikinase (PPDK) by catalyzing its phosphorylation/dephosphorylation. This chain is Putative pyruvate, phosphate dikinase regulatory protein, found in Alkaliphilus metalliredigens (strain QYMF).